A 305-amino-acid polypeptide reads, in one-letter code: Homeobox protein ceh-23 (305 aa).

2 disordered regions span residues 113–140 (ASCPEPPASSQATVTLQVPSTGSPERRR) and 262–305 (RRSK…KVLN). The span at 120–135 (ASSQATVTLQVPSTGS) shows a compositional bias: polar residues. Positions 211–270 (HRKARTIYGTTQTQQLEDMFKGQMYVVGAERENLAQRLGLSPSQVRIWFQNRRSKHRRKQ) form a DNA-binding region, homeobox. Residues 287-305 (GKDEEEDDEEDEDDVKVLN) show a composition bias toward acidic residues.

Belongs to the distal-less homeobox family.

Its subcellular location is the nucleus. Its function is as follows. Probable transcription factor. Required for differentiation of AIY interneurons, acting downstream of LIM/homeobox protein ttx-3. Modulates gene expression, acting downstream of AMP kinase aak-2/AMPK signaling. Modulates lifespan. The chain is Homeobox protein ceh-23 (ceh-23) from Caenorhabditis elegans.